The chain runs to 327 residues: Zinc transport protein ZntB (327 aa).

At 1 to 271 (METIYGSSLK…AMNRRTYTMS (271 aa)) the chain is on the cytoplasmic side. The helical transmembrane segment at 272 to 292 (LLAMIFLPTTFLTGLFGVNLG) threads the bilayer. The Periplasmic portion of the chain corresponds to 293-300 (GIPGNEYY). A helical membrane pass occupies residues 301–321 (LGFAIFCLLLFGLVLFVAWWL). The Cytoplasmic segment spans residues 322–327 (KKSKWL).

It belongs to the CorA metal ion transporter (MIT) (TC 1.A.35) family.

It localises to the cell inner membrane. The catalysed reaction is Zn(2+)(out) + H(+)(out) = Zn(2+)(in) + H(+)(in). Its function is as follows. Zinc transporter. Acts as a Zn(2+):proton symporter, which likely mediates zinc ion uptake. The protein is Zinc transport protein ZntB of Photorhabdus laumondii subsp. laumondii (strain DSM 15139 / CIP 105565 / TT01) (Photorhabdus luminescens subsp. laumondii).